The sequence spans 108 residues: Trp operon repressor homolog (108 aa).

A DNA-binding region spans residues 59 to 82; it reads QRQISQLLGVGVATITRGSNELKS.

The protein belongs to the TrpR family. In terms of assembly, homodimer.

It is found in the cytoplasm. This protein is an aporepressor. When complexed with L-tryptophan it binds the operator region of the trp operon and prevents the initiation of transcription. This Aliivibrio salmonicida (strain LFI1238) (Vibrio salmonicida (strain LFI1238)) protein is Trp operon repressor homolog.